A 98-amino-acid chain; its full sequence is NADH-ubiquinone oxidoreductase chain 4L (98 aa).

3 consecutive transmembrane segments (helical) span residues 1 to 21 (MSLTYMNMFMAFTISLLGLLM), 29 to 49 (SLLCLEGMMLSLFVMMTMAIL), and 61 to 81 (IILLVFAACEAALGLSLLVMV).

This sequence belongs to the complex I subunit 4L family. As to quaternary structure, core subunit of respiratory chain NADH dehydrogenase (Complex I) which is composed of 45 different subunits.

Its subcellular location is the mitochondrion inner membrane. The enzyme catalyses a ubiquinone + NADH + 5 H(+)(in) = a ubiquinol + NAD(+) + 4 H(+)(out). Core subunit of the mitochondrial membrane respiratory chain NADH dehydrogenase (Complex I) which catalyzes electron transfer from NADH through the respiratory chain, using ubiquinone as an electron acceptor. Part of the enzyme membrane arm which is embedded in the lipid bilayer and involved in proton translocation. The sequence is that of NADH-ubiquinone oxidoreductase chain 4L (MT-ND4L) from Vampyressa melissa (Melissa's yellow-eared bat).